A 355-amino-acid polypeptide reads, in one-letter code: 3-dehydroquinate synthase (355 aa).

NAD(+) is bound by residues 71 to 76 (EGEERK), 105 to 109 (GVVGD), 129 to 130 (TS), K142, and K151. Zn(2+) contacts are provided by E184, H246, and H263.

Belongs to the sugar phosphate cyclases superfamily. Dehydroquinate synthase family. Co(2+) serves as cofactor. It depends on Zn(2+) as a cofactor. The cofactor is NAD(+).

It localises to the cytoplasm. The enzyme catalyses 7-phospho-2-dehydro-3-deoxy-D-arabino-heptonate = 3-dehydroquinate + phosphate. It participates in metabolic intermediate biosynthesis; chorismate biosynthesis; chorismate from D-erythrose 4-phosphate and phosphoenolpyruvate: step 2/7. In terms of biological role, catalyzes the conversion of 3-deoxy-D-arabino-heptulosonate 7-phosphate (DAHP) to dehydroquinate (DHQ). The chain is 3-dehydroquinate synthase from Streptococcus pneumoniae serotype 19F (strain G54).